We begin with the raw amino-acid sequence, 35 residues long: Defensin-B (35 aa).

3 cysteine pairs are disulfide-bonded: Cys4-Cys25, Cys10-Cys33, and Cys14-Cys35.

Its subcellular location is the secreted. Has antibacterial activity against M.luteus and E.coli. The sequence is that of Defensin-B from Mytilus edulis (Blue mussel).